Here is a 274-residue protein sequence, read N- to C-terminus: Putative pyruvate, phosphate dikinase regulatory protein (274 aa).

Residue 153-160 (GISRTSKT) coordinates ADP.

The protein belongs to the pyruvate, phosphate/water dikinase regulatory protein family. PDRP subfamily.

It catalyses the reaction N(tele)-phospho-L-histidyl/L-threonyl-[pyruvate, phosphate dikinase] + ADP = N(tele)-phospho-L-histidyl/O-phospho-L-threonyl-[pyruvate, phosphate dikinase] + AMP + H(+). It carries out the reaction N(tele)-phospho-L-histidyl/O-phospho-L-threonyl-[pyruvate, phosphate dikinase] + phosphate + H(+) = N(tele)-phospho-L-histidyl/L-threonyl-[pyruvate, phosphate dikinase] + diphosphate. Its function is as follows. Bifunctional serine/threonine kinase and phosphorylase involved in the regulation of the pyruvate, phosphate dikinase (PPDK) by catalyzing its phosphorylation/dephosphorylation. The chain is Putative pyruvate, phosphate dikinase regulatory protein from Bartonella henselae (strain ATCC 49882 / DSM 28221 / CCUG 30454 / Houston 1) (Rochalimaea henselae).